The sequence spans 167 residues: ATP synthase subunit b (167 aa).

Residues 15-37 (FWQTVIFLVTLYLLSKFAWGPIM) traverse the membrane as a helical segment.

Belongs to the ATPase B chain family. In terms of assembly, F-type ATPases have 2 components, F(1) - the catalytic core - and F(0) - the membrane proton channel. F(1) has five subunits: alpha(3), beta(3), gamma(1), delta(1), epsilon(1). F(0) has three main subunits: a(1), b(2) and c(10-14). The alpha and beta chains form an alternating ring which encloses part of the gamma chain. F(1) is attached to F(0) by a central stalk formed by the gamma and epsilon chains, while a peripheral stalk is formed by the delta and b chains.

The protein resides in the cell inner membrane. Its function is as follows. F(1)F(0) ATP synthase produces ATP from ADP in the presence of a proton or sodium gradient. F-type ATPases consist of two structural domains, F(1) containing the extramembraneous catalytic core and F(0) containing the membrane proton channel, linked together by a central stalk and a peripheral stalk. During catalysis, ATP synthesis in the catalytic domain of F(1) is coupled via a rotary mechanism of the central stalk subunits to proton translocation. Component of the F(0) channel, it forms part of the peripheral stalk, linking F(1) to F(0). The chain is ATP synthase subunit b from Cytophaga hutchinsonii (strain ATCC 33406 / DSM 1761 / CIP 103989 / NBRC 15051 / NCIMB 9469 / D465).